A 395-amino-acid chain; its full sequence is Elongation factor Ts, mitochondrial (395 aa).

The transit peptide at 1–63 (MAFARAVRRP…RGFGNFIRSF (63 aa)) directs the protein to the mitochondrion.

This sequence belongs to the EF-Ts family.

It localises to the mitochondrion. Associates with the EF-Tu.GDP complex and induces the exchange of GDP to GTP. It remains bound to the aminoacyl-tRNA.EF-Tu.GTP complex up to the GTP hydrolysis stage on the ribosome. This is Elongation factor Ts, mitochondrial from Arabidopsis thaliana (Mouse-ear cress).